Here is a 210-residue protein sequence, read N- to C-terminus: Replication protein RepB (210 aa).

This sequence belongs to the Gram-positive plasmids replication protein type 2 family.

Functionally, is essential for plasmid replication. Nicks the positive strand at the plus origin of replication. This Streptococcus agalactiae protein is Replication protein RepB (repB).